Reading from the N-terminus, the 310-residue chain is Glycine--tRNA ligase alpha subunit (310 aa).

It belongs to the class-II aminoacyl-tRNA synthetase family. Tetramer of two alpha and two beta subunits.

The protein resides in the cytoplasm. It carries out the reaction tRNA(Gly) + glycine + ATP = glycyl-tRNA(Gly) + AMP + diphosphate. This Agrobacterium fabrum (strain C58 / ATCC 33970) (Agrobacterium tumefaciens (strain C58)) protein is Glycine--tRNA ligase alpha subunit.